The primary structure comprises 281 residues: Bifunctional protein FolD (281 aa).

NADP(+)-binding positions include Gly-165 to Gly-167, Thr-192, and Val-233.

This sequence belongs to the tetrahydrofolate dehydrogenase/cyclohydrolase family. In terms of assembly, homodimer.

It carries out the reaction (6R)-5,10-methylene-5,6,7,8-tetrahydrofolate + NADP(+) = (6R)-5,10-methenyltetrahydrofolate + NADPH. The catalysed reaction is (6R)-5,10-methenyltetrahydrofolate + H2O = (6R)-10-formyltetrahydrofolate + H(+). It participates in one-carbon metabolism; tetrahydrofolate interconversion. Its function is as follows. Catalyzes the oxidation of 5,10-methylenetetrahydrofolate to 5,10-methenyltetrahydrofolate and then the hydrolysis of 5,10-methenyltetrahydrofolate to 10-formyltetrahydrofolate. The protein is Bifunctional protein FolD of Mycolicibacterium paratuberculosis (strain ATCC BAA-968 / K-10) (Mycobacterium paratuberculosis).